The following is a 2087-amino-acid chain: Rho GTPase-activating protein 32 (2087 aa).

Residues 131–245 enclose the PX; atypical domain; sequence GSIQLSLSEE…LTWMEIDNKG (115 aa). One can recognise an SH3 domain in the interval 259–321; it reads PAVGAAHVIK…PGHCVELINQ (63 aa). The Rho-GAP domain maps to 372–567; the sequence is CDLGEHLLNS…FILNHVDVLF (196 aa). Phosphoserine is present on residues Ser706, Ser709, Ser732, and Ser738. Positions 818–858 are disordered; the sequence is FLDSPGYSKDKPSANKKDAETGSSQCQTPGSTASSEPVSPL. Residues 825–837 show a composition bias toward basic and acidic residues; it reads SKDKPSANKKDAE. Over residues 838 to 854 the composition is skewed to polar residues; it reads TGSSQCQTPGSTASSEP. Residues Ser852, Ser856, and Ser892 each carry the phosphoserine modification. Over residues 927–938 the composition is skewed to low complexity; sequence SNTTAQNASSST. 3 disordered regions span residues 927 to 1038, 1103 to 1143, and 1169 to 1257; these read SNTT…PPKN, PAEQ…EQHH, and VPLD…ENTS. The residue at position 952 (Ser952) is a Phosphoserine. 2 stretches are compositionally biased toward low complexity: residues 994–1005 and 1019–1029; these read SVSSSQSKAVAS and QDSVPVSSVSL. Residues 1124 to 1138 show a composition bias toward polar residues; sequence TTATGDPTHSNTTES. The span at 1172–1182 shows a compositional bias: basic and acidic residues; it reads DSEKSDDHVSF. Over residues 1188 to 1203 the composition is skewed to polar residues; sequence GKNSMPTVSFLDQDQS. A Phosphoserine modification is found at Ser1203. A compositionally biased stretch (basic and acidic residues) spans 1222 to 1232; it reads DKLHHPLEFAD. Residues 1391–1711 are interaction with GAB2; it reads RVPLLHLRAE…YSYAGLAPRP (321 aa). Asymmetric dimethylarginine is present on residues Arg1523 and Arg1533. Ser1585 is subject to Phosphoserine. An interaction with FYN region spans residues 1685–2087; that stretch reads PNRDFAFYNP…QHPETQIHAE (403 aa). The interval 1798-1896 is disordered; that stretch reads PGKTGLLSVA…QFCESKNGPP (99 aa). The span at 1823 to 1838 shows a compositional bias: basic and acidic residues; sequence GEDRFYRRHPEAEMDR. The segment covering 1847 to 1862 has biased composition (polar residues); the sequence is STQPEKPSLPQKQSSL. Basic and acidic residues predominate over residues 1875–1889; that stretch reads PEHRAHQEASHRQFC. Residue Arg2037 is modified to Omega-N-methylarginine.

The protein belongs to the PX domain-containing GAP family. In terms of assembly, interacts with NTRK1 (via cytoplasmic domain); the interaction is independent of the phosphorylation state of NTRK1. Interacts with SHC3 (via SH2 domain). Interacts with RASA1 (via SH3 domain); the interaction is necessary for the Ras activation and cell transforming activities of ARHGAP32. Interacts with GAB1 and GAB2. Interacts with CRK and CRKL. Found in a complex with CRKL and BCAR1; upon EGF stimulation BCAR1 may be replaced by EGFR. Interacts with NCK1 (via SH3 domain); NCK1 recruits phosphorylated BCAR1 to the complex. Isoform 2 interacts with FYN; the interaction appears to be dependent on tyrosine phosphorylation of ARHGAP32. Interacts with EGFR; the interaction requires EGF stimulation and is increased by SHC3. Interacts with CDC42; the interaction requires constitutively active CDC42. Interacts with CTNNB1. Interacts with GRIN2B. Interacts with DLG4 and CDH2. Interacts with GPHN. Post-translationally, isoform 2 is phosphorylated on multiple tyrosine residues by FYN. Phosphorylated tyrosine residues undergo dephosphorylation after stimulation of NMDA receptors. Phosphorylated in vitro by CaMK2 in the presence of calmodulin and calcium; which inhibits GAP activity. Isoform 1 and isoform 2 are highly expressed in brain and testis. Isoform 1 is also expressed in other tissues such as lung, liver and spleen.

It is found in the postsynaptic density. It localises to the cell projection. The protein localises to the dendritic spine. Its subcellular location is the cytoplasm. The protein resides in the cell cortex. It is found in the endosome membrane. It localises to the golgi apparatus membrane. The protein localises to the endoplasmic reticulum membrane. Its subcellular location is the membrane. Its function is as follows. GTPase-activating protein (GAP) promoting GTP hydrolysis on RHOA, CDC42 and RAC1 small GTPases. May be involved in the differentiation of neuronal cells during the formation of neurite extensions. Involved in NMDA receptor activity-dependent actin reorganization in dendritic spines. May mediate cross-talks between Ras- and Rho-regulated signaling pathways in cell growth regulation. Isoform 2 has higher GAP activity. This Homo sapiens (Human) protein is Rho GTPase-activating protein 32 (ARHGAP32).